A 538-amino-acid polypeptide reads, in one-letter code: Transmembrane protein 266 (538 aa).

Topologically, residues 1-102 are cytoplasmic; that stretch reads MALVTSFNMA…VFLLSASLNS (102 aa). The helical transmembrane segment at 103–123 threads the bilayer; sequence FLVACVILVVILLTLELLIDT. Over 124 to 130 the chain is Extracellular; sequence KLLQFSN. The helical transmembrane segment at 131–151 threads the bilayer; it reads AFQFAGVIHWISLVILSVFFS. Over 152 to 169 the chain is Cytoplasmic; it reads ETVLRIVVLGIWDYIENK. Residues 170–190 form a helical membrane-spanning segment; sequence IEVFDGAVIILSLAPMVASTV. Residues 191-199 lie on the Extracellular side of the membrane; the sequence is ANGPRSPWD. A helical transmembrane segment spans residues 200–220; the sequence is AISLIIMFRIWRVKRVIDAYV. Over 221 to 538 the chain is Cytoplasmic; sequence LPVKLEMEMV…EPKLHTVPEA (318 aa). A coiled-coil region spans residues 232-278; the sequence is QQYEKAKAIQDEQLERLTQICQEQGFEIRQLRAHLAQQDLDLAAERE. 2 disordered regions span residues 380 to 435 and 453 to 483; these read NSTC…PLPL and SSLS…VQTS. Positions 381–396 are enriched in low complexity; that stretch reads STCASATSETTSHSTC. The segment covering 397–417 has biased composition (polar residues); sequence GSVTRAQSASSQTLGSSTDCS. Over residues 425–434 the composition is skewed to low complexity; that stretch reads PSKPRSSPLP.

As to quaternary structure, homodimer; disulfide-linked. In brain, present in the granule layer of the cerebellar cortex. Localizes on the post-synaptic side of glutamatergic mossy fibers and granule cells in the cerebellum (at protein level). In terms of tissue distribution, predominantly expressed in granule cells in cerebellum (at protein level).

It localises to the cell projection. Its subcellular location is the dendrite. The protein localises to the perikaryon. It is found in the cell membrane. Its function is as follows. Voltage-sensor protein present on the post-synaptic side of glutamatergic mossy fibers and granule cells in the cerebellum. Despite the presence of a voltage-sensor segment, does not form a functional ion channel and its precise role remains unclear. Undergoes both rapid and slow structural rearrangements in response to changes in voltage. Contains a zinc-binding site that can regulate the slow conformational transition. This Mus musculus (Mouse) protein is Transmembrane protein 266.